A 1663-amino-acid polypeptide reads, in one-letter code: Kotanin synthase (1663 aa).

The segment at 19 to 168 (RPHEFSFNTQ…PLPVYGGPCH (150 aa)) is N-terminal acylcarrier protein transacylase domain (SAT). A Ketosynthase family 3 (KS3) domain is found at 301 to 731 (DSRIAVVGMS…GGNTSLLLEE (431 aa)). Residues cysteine 474, histidine 609, and histidine 650 each act as for beta-ketoacyl synthase activity in the active site. A malonyl-CoA:ACP transacylase (MAT) domain region spans residues 830-1149 (FIFSGQGSFY…SMCTLQETGV (320 aa)). The segment at 1209 to 1527 (TALVHQIMEE…PRILMNRFFD (319 aa)) is product template (PT) domain. The tract at residues 1213 to 1349 (HQIMEESFRP…GVVRCGDRQS (137 aa)) is N-terminal hotdog fold. A PKS/mFAS DH domain is found at 1213–1523 (HQIMEESFRP…LRPLPRILMN (311 aa)). Histidine 1245 acts as the Proton acceptor; for dehydratase activity in catalysis. Residues 1376–1523 (QASRVSRDLV…LRPLPRILMN (148 aa)) form a C-terminal hotdog fold region. Aspartate 1434 (proton donor; for dehydratase activity) is an active-site residue. The tract at residues 1544-1580 (DLPQVQHQPSPTTDSGPDDDPKDPNTGPLTPEVDLPV) is disordered. Residues 1586–1663 (KANTKLVRGA…ELKEYLTASW (78 aa)) enclose the Carrier domain. Position 1623 is an O-(pantetheine 4'-phosphoryl)serine (serine 1623).

Pantetheine 4'-phosphate is required as a cofactor.

Its pathway is secondary metabolite biosynthesis. Its function is as follows. Non-reducing polyketide synthase; part of the gene cluster that mediates the biosynthesis of the bicoumarin kotanin. The non-reducing polyketide synthase ktnS first catalyzes the formation of the pentaketidic 4,7-dihydroxy-5-methylcoumarin from acetyl coenzyme A and 4 malonyl coenzyme A molecules. Further O-methylation by ktnB leads to the formation of 7-demethylsiderin. Then, an oxidative phenol coupling catalyzed by the cytochrome P450 monooxygenase ktnC forms the 8,8'-dimer P-orlandin via dimerization the monomeric precursor, 7-demethylsiderin. P-orlandin is subsequently O-methylated in a stepwise fashion to demethylkotanin and kotanin. This chain is Kotanin synthase, found in Aspergillus niger (strain ATCC MYA-4892 / CBS 513.88 / FGSC A1513).